The sequence spans 85 residues: Small ribosomal subunit protein bS18 (85 aa).

Belongs to the bacterial ribosomal protein bS18 family. Part of the 30S ribosomal subunit. Forms a tight heterodimer with protein bS6.

In terms of biological role, binds as a heterodimer with protein bS6 to the central domain of the 16S rRNA, where it helps stabilize the platform of the 30S subunit. This is Small ribosomal subunit protein bS18 from Solidesulfovibrio magneticus (strain ATCC 700980 / DSM 13731 / RS-1) (Desulfovibrio magneticus).